Here is a 159-residue protein sequence, read N- to C-terminus: Putative pre-16S rRNA nuclease (159 aa).

It belongs to the YqgF nuclease family.

The protein localises to the cytoplasm. Its function is as follows. Could be a nuclease involved in processing of the 5'-end of pre-16S rRNA. This chain is Putative pre-16S rRNA nuclease, found in Bartonella henselae (strain ATCC 49882 / DSM 28221 / CCUG 30454 / Houston 1) (Rochalimaea henselae).